Here is a 406-residue protein sequence, read N- to C-terminus: Arginine biosynthesis bifunctional protein ArgJ (406 aa).

Positions 156, 182, 193, 279, 401, and 406 each coordinate substrate. T193 serves as the catalytic Nucleophile.

The protein belongs to the ArgJ family. In terms of assembly, heterotetramer of two alpha and two beta chains.

The protein resides in the cytoplasm. The catalysed reaction is N(2)-acetyl-L-ornithine + L-glutamate = N-acetyl-L-glutamate + L-ornithine. The enzyme catalyses L-glutamate + acetyl-CoA = N-acetyl-L-glutamate + CoA + H(+). It participates in amino-acid biosynthesis; L-arginine biosynthesis; L-ornithine and N-acetyl-L-glutamate from L-glutamate and N(2)-acetyl-L-ornithine (cyclic): step 1/1. Its pathway is amino-acid biosynthesis; L-arginine biosynthesis; N(2)-acetyl-L-ornithine from L-glutamate: step 1/4. With respect to regulation, feedback inhibition by L-arginine. Its function is as follows. Catalyzes two activities which are involved in the cyclic version of arginine biosynthesis: the synthesis of N-acetylglutamate from glutamate and acetyl-CoA as the acetyl donor, and of ornithine by transacetylation between N(2)-acetylornithine and glutamate. The polypeptide is Arginine biosynthesis bifunctional protein ArgJ (Bacillus amyloliquefaciens (Bacillus velezensis)).